A 394-amino-acid chain; its full sequence is MSKETFQRNKPHINIGTIGHVDHGKTTLTAAITRALSAEGLANFCDYSSIDNTPEEKARGITINASHVEYETPNRHYAHVDCPGHADYVKNMITGAAQMDGAILVVSATDGAMPQTKEHILLARQVGVPYIVVFLNKIDMISQEDAELVDLVEMELSELLEEKGYKGCPIIRGSALKALEGDASYVEKIRELMQAVDDNIPTPEREVDKPFLMPIEDVFSISGRGTVVTGRIERGIVKVGDKVQIVGLRDTRETIVTGVEMFRKELPEGQAGENVGLLLRGIGKNDVERGMVICQPNSVKSHTQFKGAVYILQKEEGGRHKPFFTGYRPQFFFRTTDVTGVVTLPEGTEMVMPGDNVEFEVQLISPVALEEGMRFAIREGGRTIGAGTISKIIA.

The tr-type G domain occupies 10–204 (KPHINIGTIG…AVDDNIPTPE (195 aa)). The segment at 19-26 (GHVDHGKT) is G1. GTP is bound at residue 19 to 26 (GHVDHGKT). Thr-26 contributes to the Mg(2+) binding site. The tract at residues 60–64 (GITIN) is G2. The G3 stretch occupies residues 81–84 (DCPG). GTP contacts are provided by residues 81–85 (DCPGH) and 136–139 (NKID). Residues 136–139 (NKID) are G4. Residues 174 to 176 (SAL) form a G5 region.

This sequence belongs to the TRAFAC class translation factor GTPase superfamily. Classic translation factor GTPase family. EF-Tu/EF-1A subfamily. In terms of assembly, monomer.

The protein localises to the cytoplasm. It carries out the reaction GTP + H2O = GDP + phosphate + H(+). Its function is as follows. GTP hydrolase that promotes the GTP-dependent binding of aminoacyl-tRNA to the A-site of ribosomes during protein biosynthesis. This chain is Elongation factor Tu, found in Chlamydia caviae (strain ATCC VR-813 / DSM 19441 / 03DC25 / GPIC) (Chlamydophila caviae).